The following is a 1201-amino-acid chain: Protein dduB (1201 aa).

The signal sequence occupies residues 1–22; sequence MKFIKYLLILFLILKINYFVES. Residues 23-1180 lie on the Extracellular side of the membrane; sequence GVDCQKNTEY…QDPSDELSTS (1158 aa). Residues Asn68, Asn122, Asn150, Asn185, Asn283, Asn348, Asn360, Asn437, Asn448, Asn518, Asn535, Asn554, Asn585, Asn631, Asn759, Asn815, Asn830, Asn844, Asn946, Asn1042, Asn1058, Asn1098, and Asn1108 are each glycosylated (N-linked (GlcNAc...) asparagine). A helical membrane pass occupies residues 1181–1201; the sequence is SFIQLNILSLLLISIFTIFIL.

It is found in the membrane. This chain is Protein dduB (dduB), found in Dictyostelium discoideum (Social amoeba).